The primary structure comprises 148 residues: Photosystem I reaction center subunit XI (148 aa).

3 helical membrane-spanning segments follow: residues 48 to 68 (LEIG…LGPL), 73 to 93 (IGLL…TLGL), and 122 to 142 (GGFF…LSSI).

This sequence belongs to the PsaL family.

The protein resides in the plastid. It localises to the chloroplast thylakoid membrane. The sequence is that of Photosystem I reaction center subunit XI from Thalassiosira pseudonana (Marine diatom).